An 89-amino-acid chain; its full sequence is Myrmicitoxin(1)-Pr2c (89 aa).

The signal sequence occupies residues 1–23; sequence MEIPKLLYIAVIAIGLSGSLTCA. A propeptide spanning residues 24 to 61 is cleaved from the precursor; sequence TPLANPWADPEAEANPKAKATAEATAEAIAEALAEPEP. At Asn-88 the chain carries Asparagine amide.

It belongs to the formicidae venom clade 1 family. In terms of tissue distribution, expressed by the venom gland.

It localises to the secreted. Functionally, vertebrate-selective toxin that causes pain by targeting voltage-gated sodium channels. This Pogonomyrmex rugosus (Desert harvester ant) protein is Myrmicitoxin(1)-Pr2c.